The primary structure comprises 308 residues: Protein translocase subunit SecF (308 aa).

A run of 6 helical transmembrane segments spans residues 14 to 34 (FFLL…LFGF), 134 to 154 (VYAV…RFEF), 158 to 178 (ISGI…FALL), 185 to 205 (TFVA…IVIF), 238 to 258 (SIRT…FGGI), and 267 to 287 (LIIG…PIWV).

It belongs to the SecD/SecF family. SecF subfamily. As to quaternary structure, forms a complex with SecD. Part of the essential Sec protein translocation apparatus which comprises SecA, SecYEG and auxiliary proteins SecDF. Other proteins may also be involved.

The protein localises to the cell membrane. Its function is as follows. Part of the Sec protein translocase complex. Interacts with the SecYEG preprotein conducting channel. SecDF uses the proton motive force (PMF) to complete protein translocation after the ATP-dependent function of SecA. The polypeptide is Protein translocase subunit SecF (Alicyclobacillus acidocaldarius subsp. acidocaldarius (strain ATCC 27009 / DSM 446 / BCRC 14685 / JCM 5260 / KCTC 1825 / NBRC 15652 / NCIMB 11725 / NRRL B-14509 / 104-IA) (Bacillus acidocaldarius)).